Here is an 88-residue protein sequence, read N- to C-terminus: Small ribosomal subunit protein uS17 (88 aa).

The protein belongs to the universal ribosomal protein uS17 family. In terms of assembly, part of the 30S ribosomal subunit.

In terms of biological role, one of the primary rRNA binding proteins, it binds specifically to the 5'-end of 16S ribosomal RNA. The protein is Small ribosomal subunit protein uS17 of Syntrophotalea carbinolica (strain DSM 2380 / NBRC 103641 / GraBd1) (Pelobacter carbinolicus).